The following is a 269-amino-acid chain: GTP cyclohydrolase FolE2 (269 aa).

This sequence belongs to the GTP cyclohydrolase IV family.

The catalysed reaction is GTP + H2O = 7,8-dihydroneopterin 3'-triphosphate + formate + H(+). The protein operates within cofactor biosynthesis; 7,8-dihydroneopterin triphosphate biosynthesis; 7,8-dihydroneopterin triphosphate from GTP: step 1/1. Its function is as follows. Converts GTP to 7,8-dihydroneopterin triphosphate. This chain is GTP cyclohydrolase FolE2, found in Burkholderia thailandensis (strain ATCC 700388 / DSM 13276 / CCUG 48851 / CIP 106301 / E264).